A 430-amino-acid chain; its full sequence is 3-phosphoshikimate 1-carboxyvinyltransferase (430 aa).

3-phosphoshikimate contacts are provided by lysine 23, serine 24, and arginine 28. A phosphoenolpyruvate-binding site is contributed by lysine 23. Phosphoenolpyruvate-binding residues include glycine 95 and arginine 123. The 3-phosphoshikimate site is built by serine 169, glutamine 171, aspartate 315, and lysine 342. A phosphoenolpyruvate-binding site is contributed by glutamine 171. The active-site Proton acceptor is aspartate 315. Phosphoenolpyruvate contacts are provided by arginine 346 and arginine 388.

It belongs to the EPSP synthase family. As to quaternary structure, monomer.

The protein localises to the cytoplasm. The enzyme catalyses 3-phosphoshikimate + phosphoenolpyruvate = 5-O-(1-carboxyvinyl)-3-phosphoshikimate + phosphate. It participates in metabolic intermediate biosynthesis; chorismate biosynthesis; chorismate from D-erythrose 4-phosphate and phosphoenolpyruvate: step 6/7. In terms of biological role, catalyzes the transfer of the enolpyruvyl moiety of phosphoenolpyruvate (PEP) to the 5-hydroxyl of shikimate-3-phosphate (S3P) to produce enolpyruvyl shikimate-3-phosphate and inorganic phosphate. In Streptococcus pyogenes serotype M2 (strain MGAS10270), this protein is 3-phosphoshikimate 1-carboxyvinyltransferase.